Consider the following 296-residue polypeptide: Protein FAM221A (296 aa).

Residues 235 to 263 (MQPPSTSSPQPLAVGPSTQISSLRKPEED) are disordered. Positions 237 to 256 (PPSTSSPQPLAVGPSTQISS) are enriched in polar residues.

Belongs to the FAM221 family.

This chain is Protein FAM221A (Fam221a), found in Rattus norvegicus (Rat).